We begin with the raw amino-acid sequence, 545 residues long: Glucose-6-phosphate isomerase (545 aa).

The active-site Proton donor is Glu351. Residues His382 and Lys510 contribute to the active site.

The protein belongs to the GPI family.

It is found in the cytoplasm. It carries out the reaction alpha-D-glucose 6-phosphate = beta-D-fructose 6-phosphate. The protein operates within carbohydrate biosynthesis; gluconeogenesis. It functions in the pathway carbohydrate degradation; glycolysis; D-glyceraldehyde 3-phosphate and glycerone phosphate from D-glucose: step 2/4. Its function is as follows. Catalyzes the reversible isomerization of glucose-6-phosphate to fructose-6-phosphate. In Shewanella baltica (strain OS155 / ATCC BAA-1091), this protein is Glucose-6-phosphate isomerase.